Here is a 130-residue protein sequence, read N- to C-terminus: Small ribosomal subunit protein uS11 (130 aa).

This sequence belongs to the universal ribosomal protein uS11 family. Part of the 30S ribosomal subunit. Interacts with proteins S7 and S18. Binds to IF-3.

Functionally, located on the platform of the 30S subunit, it bridges several disparate RNA helices of the 16S rRNA. Forms part of the Shine-Dalgarno cleft in the 70S ribosome. This chain is Small ribosomal subunit protein uS11, found in Shewanella frigidimarina (strain NCIMB 400).